A 251-amino-acid chain; its full sequence is Membrane-anchored junction protein (251 aa).

At methionine 1–proline 227 the chain is on the nuclear side. Residues arginine 140–lysine 225 form a disordered region. A compositionally biased stretch (polar residues) spans glutamate 183–threonine 198. Residues alanine 228–phenylalanine 246 traverse the membrane as a helical segment. Residues arginine 247–glutamine 251 are Perinuclear space-facing.

This sequence belongs to the MAJIN family. As to quaternary structure, component of the MAJIN-TERB1-TERB2 complex, composed of MAJIN, TERB1 and TERB2.

The protein localises to the nucleus inner membrane. It localises to the chromosome. It is found in the telomere. In terms of biological role, meiosis-specific telomere-associated protein involved in meiotic telomere attachment to the nucleus inner membrane, a crucial step for homologous pairing and synapsis. Component of the MAJIN-TERB1-TERB2 complex, which promotes telomere cap exchange by mediating attachment of telomeric DNA to the inner nuclear membrane and replacement of the protective cap of telomeric chromosomes: in early meiosis, the MAJIN-TERB1-TERB2 complex associates with telomeric DNA and the shelterin/telosome complex. During prophase, the complex matures and promotes release of the shelterin/telosome complex from telomeric DNA. In the complex, MAJIN acts as the anchoring subunit to the nucleus inner membrane. MAJIN shows DNA-binding activity, possibly for the stabilization of telomere attachment on the nucleus inner membrane. This is Membrane-anchored junction protein from Rattus norvegicus (Rat).